Consider the following 142-residue polypeptide: Large ribosomal subunit protein uL29 (142 aa).

The protein belongs to the universal ribosomal protein uL29 family.

This chain is Large ribosomal subunit protein uL29 (RPL35), found in Theileria annulata.